A 678-amino-acid polypeptide reads, in one-letter code: Translation initiation factor eIF2B subunit epsilon (678 aa).

The residue at position 172 (T172) is a Phosphothreonine. The segment at 467-489 is disordered; that stretch reads STNELHLSDSESSETSSSSEEDM. Position 500 is a phosphoserine (S500). Residue T503 is modified to Phosphothreonine. S506 bears the Phosphoserine mark. Residues 508 to 674 enclose the W2 domain; sequence DFDEGDFNKE…NTAESESESE (167 aa).

Belongs to the eIF-2B gamma/epsilon subunits family. As to quaternary structure, component of the translation initiation factor 2B (eIF2B) complex which is a heterodecamer of two sets of five different subunits: alpha, beta, gamma, delta and epsilon. Subunits alpha, beta and delta comprise a regulatory subcomplex and subunits epsilon and gamma comprise a catalytic subcomplex. Within the complex, the hexameric regulatory complex resides at the center, with the two heterodimeric catalytic subcomplexes bound on opposite sides.

Its subcellular location is the cytoplasm. It is found in the cytosol. Functionally, acts as a component of the translation initiation factor 2B (eIF2B) complex, which catalyzes the exchange of GDP for GTP on the eukaryotic initiation factor 2 (eIF2) complex gamma subunit. Its guanine nucleotide exchange factor activity is repressed when bound to eIF2 complex phosphorylated on the alpha subunit, thereby limiting the amount of methionyl-initiator methionine tRNA available to the ribosome and consequently global translation is repressed. In Schizosaccharomyces pombe (strain 972 / ATCC 24843) (Fission yeast), this protein is Translation initiation factor eIF2B subunit epsilon (tif225).